The primary structure comprises 424 residues: CinA-like protein (424 aa).

This sequence belongs to the CinA family.

This is CinA-like protein from Shewanella woodyi (strain ATCC 51908 / MS32).